The sequence spans 203 residues: Pyrrolidone-carboxylate peptidase (203 aa).

Catalysis depends on residues glutamate 78, cysteine 141, and histidine 165.

The protein belongs to the peptidase C15 family. As to quaternary structure, homotetramer.

It is found in the cytoplasm. It carries out the reaction Release of an N-terminal pyroglutamyl group from a polypeptide, the second amino acid generally not being Pro.. Functionally, removes 5-oxoproline from various penultimate amino acid residues except L-proline. The protein is Pyrrolidone-carboxylate peptidase of Thermoanaerobacter pseudethanolicus (strain ATCC 33223 / 39E) (Clostridium thermohydrosulfuricum).